The primary structure comprises 201 residues: Small ribosomal subunit protein uS4 (201 aa).

A disordered region spans residues 1–42 (MARYTGPVTRKSRRLGTDLVGGDQSFEKRPYPPGQHGRARIK). The S4 RNA-binding domain occupies 91–157 (SRLDNVVYRA…VPFQIARETA (67 aa)).

Belongs to the universal ribosomal protein uS4 family. As to quaternary structure, part of the 30S ribosomal subunit. Contacts protein S5. The interaction surface between S4 and S5 is involved in control of translational fidelity.

Its function is as follows. One of the primary rRNA binding proteins, it binds directly to 16S rRNA where it nucleates assembly of the body of the 30S subunit. Functionally, with S5 and S12 plays an important role in translational accuracy. This Mycobacterium ulcerans (strain Agy99) protein is Small ribosomal subunit protein uS4.